Here is a 270-residue protein sequence, read N- to C-terminus: tRNA pseudouridine synthase A (270 aa).

Asp54 serves as the catalytic Nucleophile. Residue Tyr112 coordinates substrate.

It belongs to the tRNA pseudouridine synthase TruA family. As to quaternary structure, homodimer.

It carries out the reaction uridine(38/39/40) in tRNA = pseudouridine(38/39/40) in tRNA. Its function is as follows. Formation of pseudouridine at positions 38, 39 and 40 in the anticodon stem and loop of transfer RNAs. The polypeptide is tRNA pseudouridine synthase A (Bordetella bronchiseptica (strain ATCC BAA-588 / NCTC 13252 / RB50) (Alcaligenes bronchisepticus)).